Reading from the N-terminus, the 577-residue chain is Probable HECT-type ubiquitin ligase-interacting protein creD (577 aa).

Disordered stretches follow at residues L376–S398 and N428–R566. Composition is skewed to polar residues over residues N428–E447 and S460–E472. Residues L473 to V486 show a composition bias toward basic and acidic residues. Positions S528–F544 are enriched in polar residues.

Belongs to the arrestin family. In terms of assembly, interacts with hulA.

Component of the regulatory network controlling carbon source utilization through ubiquitination and deubiquitination involving creA, creB, creC, creD and acrB. May be involved in signaling by recognizing appropriately phosphorylated substrates via its arrestin domains and then recruit a HECT-type ubiquitin ligase such as hulA, leading to ubiquitination of the substrate, providing a link between ubiquitination and phosphorylation in protein regulation and stability. This is Probable HECT-type ubiquitin ligase-interacting protein creD (creD) from Aspergillus terreus (strain NIH 2624 / FGSC A1156).